The chain runs to 496 residues: Trimethylamine methyltransferase MttB (496 aa).

Pyl331 is a non-standard amino acid (pyrrolysine).

Belongs to the trimethylamine methyltransferase family.

The enzyme catalyses Co(I)-[trimethylamine-specific corrinoid protein] + trimethylamine + H(+) = methyl-Co(III)-[trimethylamine-specific corrinoid protein] + dimethylamine. In terms of biological role, catalyzes the transfer of a methyl group from trimethylamine to the corrinoid cofactor of MttC. The chain is Trimethylamine methyltransferase MttB from Desulfitobacterium hafniense (strain DSM 10664 / DCB-2).